The chain runs to 432 residues: Cytochrome c biogenesis protein CcsB (432 aa).

A run of 3 helical transmembrane segments spans residues 14–34 (LRIA…GTAI), 72–92 (SSWF…CSWR), and 162–182 (VGPM…VWGS).

It belongs to the Ccs1/CcsB family. In terms of assembly, may interact with CcsA.

Its subcellular location is the cellular thylakoid membrane. In terms of biological role, required during biogenesis of c-type cytochromes (cytochrome c6 and cytochrome f) at the step of heme attachment. This chain is Cytochrome c biogenesis protein CcsB, found in Prochlorococcus marinus (strain MIT 9303).